A 402-amino-acid polypeptide reads, in one-letter code: UDP-GlcNAc:betaGal beta-1,3-N-acetylglucosaminyltransferase 9 (402 aa).

The Cytoplasmic portion of the chain corresponds to 1–10 (MRRRLRLRRD). Residues 11–27 (ALLTLLLGASLGLLLYA) form a helical; Signal-anchor for type II membrane protein membrane-spanning segment. Over 28–402 (QRDGAAPTAS…VAAGPFQWDS (375 aa)) the chain is Lumenal. A compositionally biased stretch (low complexity) spans 32–47 (AAPTASAPRGRGRAAP). The segment at 32 to 83 (AAPTASAPRGRGRAAPRPTPGPRAFQLPDAGAAPPAYEGDTPAPPTPTGPFD) is disordered.

It belongs to the glycosyltransferase 31 family.

It localises to the golgi apparatus membrane. This Homo sapiens (Human) protein is UDP-GlcNAc:betaGal beta-1,3-N-acetylglucosaminyltransferase 9.